A 560-amino-acid chain; its full sequence is Kinesin light chain 1 (560 aa).

Residues 27-156 (KTKQVIQGLE…HLEFMNQLKK (130 aa)) adopt a coiled-coil conformation. The span at 156–176 (KYDDDISPSEDKDSDSSKEPL) shows a compositional bias: basic and acidic residues. Positions 156–203 (KYDDDISPSEDKDSDSSKEPLDDLFPNDEDDPGQGIQQQHSSAAAAAQ) are disordered. The residue at position 162 (Ser-162) is a Phosphoserine. The segment covering 188-203 (GQGIQQQHSSAAAAAQ) has biased composition (low complexity). 5 TPR repeats span residues 213-246 (LRTL…LEKT), 255-288 (ATML…REKT), 297-330 (AATL…REKV), 339-372 (AKQL…YQTK), and 381-414 (AKTK…AHER). The residue at position 449 (Tyr-449) is a Phosphotyrosine. Phosphoserine is present on Ser-460. Residues 464–497 (TTTLKNLGALYRRQGKFEAAETLEEAALRSRKQG) form a TPR 6 repeat. Phosphoserine is present on residues Ser-521 and Ser-524.

The protein belongs to the kinesin light chain family. Oligomeric complex composed of two heavy chains and two light chains. Interacts with SPAG9. Interacts with ATCAY; may link mitochondria to KLC1 and regulate mitochondria localization into neuron projections. Interacts (via TPR repeats) with TOR1A; the interaction associates TOR1A with the kinesin oligomeric complex. Interacts with BORCS5. Interacts with MAPK8IP3/JIP3 and NTRK2/TRKB; interaction with NTRK2/TRKB is mediated by MAPK8IP3/JIP3. Interacts with CLSTN1; phosphorylation at Ser-460 inhibits interaction with CLSTN1. Post-translationally, phosphorylation at Ser-460 by ERK inhibits interaction with CLSTN1 and localization to cytoplasmic vesicles. As to expression, expressed in brain (at protein level).

It localises to the cell projection. It is found in the growth cone. The protein localises to the cytoplasmic vesicle. The protein resides in the cytoplasm. Its subcellular location is the cytoskeleton. Functionally, kinesin is a microtubule-associated force-producing protein that may play a role in organelle transport. The light chain may function in coupling of cargo to the heavy chain or in the modulation of its ATPase activity. The chain is Kinesin light chain 1 (Klc1) from Rattus norvegicus (Rat).